The sequence spans 384 residues: Probable tRNA sulfurtransferase (384 aa).

The THUMP domain occupies glutamate 57–isoleucine 160. Residues methionine 177–leucine 178, tyrosine 202–phenylalanine 203, arginine 259, glycine 281, and glutamine 290 contribute to the ATP site.

The protein belongs to the ThiI family.

It localises to the cytoplasm. It catalyses the reaction [ThiI sulfur-carrier protein]-S-sulfanyl-L-cysteine + a uridine in tRNA + 2 reduced [2Fe-2S]-[ferredoxin] + ATP + H(+) = [ThiI sulfur-carrier protein]-L-cysteine + a 4-thiouridine in tRNA + 2 oxidized [2Fe-2S]-[ferredoxin] + AMP + diphosphate. The catalysed reaction is [ThiS sulfur-carrier protein]-C-terminal Gly-Gly-AMP + S-sulfanyl-L-cysteinyl-[cysteine desulfurase] + AH2 = [ThiS sulfur-carrier protein]-C-terminal-Gly-aminoethanethioate + L-cysteinyl-[cysteine desulfurase] + A + AMP + 2 H(+). It functions in the pathway cofactor biosynthesis; thiamine diphosphate biosynthesis. Its function is as follows. Catalyzes the ATP-dependent transfer of a sulfur to tRNA to produce 4-thiouridine in position 8 of tRNAs, which functions as a near-UV photosensor. Also catalyzes the transfer of sulfur to the sulfur carrier protein ThiS, forming ThiS-thiocarboxylate. This is a step in the synthesis of thiazole, in the thiamine biosynthesis pathway. The sulfur is donated as persulfide by IscS. The polypeptide is Probable tRNA sulfurtransferase (Clostridium acetobutylicum (strain ATCC 824 / DSM 792 / JCM 1419 / IAM 19013 / LMG 5710 / NBRC 13948 / NRRL B-527 / VKM B-1787 / 2291 / W)).